A 267-amino-acid chain; its full sequence is Shikimate dehydrogenase (NADP(+)) (267 aa).

Residues 14-16 (SLS) and T61 contribute to the shikimate site. K65 (proton acceptor) is an active-site residue. Shikimate contacts are provided by N86 and D101. Residues 126-130 (GAGGA), 150-155 (NRTHSK), and L213 contribute to the NADP(+) site. Residue Y215 coordinates shikimate. G236 is an NADP(+) binding site.

This sequence belongs to the shikimate dehydrogenase family. Homodimer.

The enzyme catalyses shikimate + NADP(+) = 3-dehydroshikimate + NADPH + H(+). Its pathway is metabolic intermediate biosynthesis; chorismate biosynthesis; chorismate from D-erythrose 4-phosphate and phosphoenolpyruvate: step 4/7. Its function is as follows. Involved in the biosynthesis of the chorismate, which leads to the biosynthesis of aromatic amino acids. Catalyzes the reversible NADPH linked reduction of 3-dehydroshikimate (DHSA) to yield shikimate (SA). This is Shikimate dehydrogenase (NADP(+)) from Vesicomyosocius okutanii subsp. Calyptogena okutanii (strain HA).